Consider the following 471-residue polypeptide: Ribulose bisphosphate carboxylase large chain (471 aa).

Residues Asn119 and Thr169 each coordinate substrate. Lys171 (proton acceptor) is an active-site residue. Substrate is bound at residue Lys173. The Mg(2+) site is built by Lys197, Asp199, and Glu200. Lys197 is subject to N6-carboxylysine. His290 serves as the catalytic Proton acceptor. Residues Arg291, His323, and Ser375 each contribute to the substrate site.

The protein belongs to the RuBisCO large chain family. Type I subfamily. In terms of assembly, heterohexadecamer of 8 large chains and 8 small chains; disulfide-linked. The disulfide link is formed within the large subunit homodimers. Requires Mg(2+) as cofactor. In terms of processing, the disulfide bond which can form in the large chain dimeric partners within the hexadecamer appears to be associated with oxidative stress and protein turnover.

It localises to the carboxysome. It catalyses the reaction 2 (2R)-3-phosphoglycerate + 2 H(+) = D-ribulose 1,5-bisphosphate + CO2 + H2O. The enzyme catalyses D-ribulose 1,5-bisphosphate + O2 = 2-phosphoglycolate + (2R)-3-phosphoglycerate + 2 H(+). Its function is as follows. RuBisCO catalyzes two reactions: the carboxylation of D-ribulose 1,5-bisphosphate, the primary event in carbon dioxide fixation, as well as the oxidative fragmentation of the pentose substrate in the photorespiration process. Both reactions occur simultaneously and in competition at the same active site. The protein is Ribulose bisphosphate carboxylase large chain of Microcystis aeruginosa (strain NIES-843 / IAM M-2473).